A 423-amino-acid chain; its full sequence is Dihydroorotase (423 aa).

Zn(2+) is bound by residues His60 and His62. Residues 62–64 (HFR) and Asn94 each bind substrate. Residues Asp152, His179, His232, and Asp305 each contribute to the Zn(2+) site. Asp305 is a catalytic residue. Substrate contacts are provided by residues His309 and 323–324 (PG).

The protein belongs to the metallo-dependent hydrolases superfamily. DHOase family. Class I DHOase subfamily. It depends on Zn(2+) as a cofactor.

It catalyses the reaction (S)-dihydroorotate + H2O = N-carbamoyl-L-aspartate + H(+). It functions in the pathway pyrimidine metabolism; UMP biosynthesis via de novo pathway; (S)-dihydroorotate from bicarbonate: step 3/3. Its function is as follows. Catalyzes the reversible cyclization of carbamoyl aspartate to dihydroorotate. The chain is Dihydroorotase from Sulfurihydrogenibium sp. (strain YO3AOP1).